The sequence spans 831 residues: Phenylalanine--tRNA ligase beta subunit (831 aa).

The region spanning 42 to 157 (ADISGPIVVG…GFAEPGTKAD (116 aa)) is the tRNA-binding domain. One can recognise a B5 domain in the interval 408 to 483 (VPREPIVVRA…RNEGYENIPA (76 aa)). Mg(2+) is bound by residues D461, D467, E470, and E471. An FDX-ACB domain is found at 737-830 (STYPVATQDV…AAERTGAVLR (94 aa)).

Belongs to the phenylalanyl-tRNA synthetase beta subunit family. Type 1 subfamily. Tetramer of two alpha and two beta subunits. The cofactor is Mg(2+).

The protein resides in the cytoplasm. The catalysed reaction is tRNA(Phe) + L-phenylalanine + ATP = L-phenylalanyl-tRNA(Phe) + AMP + diphosphate + H(+). The polypeptide is Phenylalanine--tRNA ligase beta subunit (Thermobifida fusca (strain YX)).